The chain runs to 118 residues: Large ribosomal subunit protein bL20 (118 aa).

Belongs to the bacterial ribosomal protein bL20 family.

Binds directly to 23S ribosomal RNA and is necessary for the in vitro assembly process of the 50S ribosomal subunit. It is not involved in the protein synthesizing functions of that subunit. In Yersinia enterocolitica serotype O:8 / biotype 1B (strain NCTC 13174 / 8081), this protein is Large ribosomal subunit protein bL20.